The chain runs to 246 residues: NAD-dependent protein deacylase (246 aa).

Residues 1-245 (MKEFITKHRD…ELIREILDNP (245 aa)) form the Deacetylase sirtuin-type domain. Residue 20–39 (GAGISAESGIPTFRGSEGLW) participates in NAD(+) binding. Substrate is bound by residues tyrosine 64 and arginine 67. 98-101 (QNVD) serves as a coordination point for NAD(+). Histidine 116 acts as the Proton acceptor in catalysis. Zn(2+) is bound by residues cysteine 124, cysteine 127, cysteine 146, and cysteine 149. NAD(+)-binding positions include 186 to 188 (GTS), 212 to 214 (NPE), and threonine 230.

Belongs to the sirtuin family. Class III subfamily. It depends on Zn(2+) as a cofactor.

The protein resides in the cytoplasm. It catalyses the reaction N(6)-acetyl-L-lysyl-[protein] + NAD(+) + H2O = 2''-O-acetyl-ADP-D-ribose + nicotinamide + L-lysyl-[protein]. It carries out the reaction N(6)-succinyl-L-lysyl-[protein] + NAD(+) + H2O = 2''-O-succinyl-ADP-D-ribose + nicotinamide + L-lysyl-[protein]. Functionally, NAD-dependent lysine deacetylase and desuccinylase that specifically removes acetyl and succinyl groups on target proteins. Modulates the activities of several proteins which are inactive in their acylated form. The polypeptide is NAD-dependent protein deacylase (Leptospira interrogans serogroup Icterohaemorrhagiae serovar copenhageni (strain Fiocruz L1-130)).